The chain runs to 707 residues: Complement C1r-A subcomponent (707 aa).

Positions 1–16 (MWLFALLVTLFYGVEG) are cleaved as a signal peptide. Residues 17–140 (SIYLPQKLYG…KGFLAYYQAV (124 aa)) form the CUB 1 domain. Ca(2+)-binding residues include E65, D73, and D118. C70 and C88 are oxidised to a cystine. Residue N124 is glycosylated (N-linked (GlcNAc...) asparagine). Ca(2+) is bound by residues D141, L142, and E144. One can recognise an EGF-like; calcium-binding domain in the interval 141-189 (DLDECASQPNSVEEGLQPRCQHLCHNYVGGYFCSCHPGYELQKDGQSCQ). Intrachain disulfides connect C145–C164, C160–C173, C175–C188, and C192–C219. N166, Y167, and G170 together coordinate Ca(2+). A (3R)-3-hydroxyasparagine modification is found at N166. A CUB 2 domain is found at 192-304 (CSSELYTEPS…RGWKLHYTTE (113 aa)). S205 is subject to Phosphoserine; by CK2. The N-linked (GlcNAc...) asparagine glycan is linked to N220. D242, D252, D289, and D293 together coordinate Ca(2+). C249 and C267 form a disulfide bridge. Sushi domains lie at 306–372 (IKCP…RCKI) and 373–448 (KNCG…RCLP). Disulfide bonds link C308–C357, C337–C370, C375–C428, C405–C446, and C450–C579. The Peptidase S1 domain occupies 463–704 (IIRGQPARPG…YVDWIKKEMG (242 aa)). Active-site charge relay system residues include H501 and D559. N583 carries an N-linked (GlcNAc...) asparagine glycan. 2 disulfides stabilise this stretch: C622-C641 and C652-C682. Residue S656 is the Charge relay system of the active site.

This sequence belongs to the peptidase S1 family. As to quaternary structure, core component of the complement C1 complex, a calcium-dependent complex composed of 1 molecule of the C1Q subcomplex, 2 molecules of C1R and 2 molecules of C1S. The C1Q subcomplex is composed 18 subunits: 3 chains of C1QA, C1QB, and C1QC trimerize to form 6 collagen-like triple helices connected to six globular ligand-recognition modules. Within the C1 complex, C1R is a dimer of identical chains, each of which is activated by cleavage into two chains, heavy and light, connected by disulfide bonds. In terms of processing, cleaved and activated by autocatalytic processing to generate Complement C1r subcomponent heavy and light chains that are connected by disulfide bonds. Post-translationally, the iron and 2-oxoglutarate dependent 3-hydroxylation of aspartate and asparagine is (R) stereospecific within EGF domains.

It is found in the secreted. It localises to the cell surface. It catalyses the reaction Selective cleavage of Lys(or Arg)-|-Ile bond in complement subcomponent C1s to form the active form of C1s (EC 3.4.21.42).. Its activity is regulated as follows. Activated by the C1Q subcomplex of the C1 complex following C1Q binding to immunoglobulins (IgG or IgM) complexed with antigens to form antigen-antibody complexes on the surface of pathogens. Immunoglobulin-binding promotes autoactivation of C1R, which results in the cleavage of the Arg-Ile bond in the catalytic domain. Functionally, serine protease component of the complement C1 complex, a multiprotein complex that initiates the classical pathway of the complement system, a cascade of proteins that leads to phagocytosis and breakdown of pathogens and signaling that strengthens the adaptive immune system. C1R catalyzes the first enzymatic step in the classical complement pathway: it is activated by the C1Q subcomplex of the C1 complex, which associates with IgG or IgM immunoglobulins complexed with antigens to form antigen-antibody complexes on the surface of pathogens. Immunoglobulin-binding promotes the autocatalytic cleavage and activation of C1R. Activated C1R then cleaves and activates C1S, the second protease of the classical complement pathway. It is unclear if C1R activates C1S within single, strained C1 complexes or between neighboring C1 complexes on surfaces. The polypeptide is Complement C1r-A subcomponent (C1ra) (Mus musculus (Mouse)).